The primary structure comprises 130 residues: Small ribosomal subunit protein uS11 (130 aa).

The protein belongs to the universal ribosomal protein uS11 family. Part of the 30S ribosomal subunit. Interacts with proteins S7 and S18. Binds to IF-3.

Located on the platform of the 30S subunit, it bridges several disparate RNA helices of the 16S rRNA. Forms part of the Shine-Dalgarno cleft in the 70S ribosome. The protein is Small ribosomal subunit protein uS11 of Prochlorococcus marinus (strain MIT 9312).